The following is a 358-amino-acid chain: DNA polymerase IV (358 aa).

The 182-residue stretch at 6-187 folds into the UmuC domain; it reads IIHIDMDYFF…LDIGDFPGVG (182 aa). Positions 10 and 105 each coordinate Mg(2+). The active site involves glutamate 106.

This sequence belongs to the DNA polymerase type-Y family. In terms of assembly, monomer. It depends on Mg(2+) as a cofactor.

It localises to the cytoplasm. The enzyme catalyses DNA(n) + a 2'-deoxyribonucleoside 5'-triphosphate = DNA(n+1) + diphosphate. In terms of biological role, poorly processive, error-prone DNA polymerase involved in untargeted mutagenesis. Copies undamaged DNA at stalled replication forks, which arise in vivo from mismatched or misaligned primer ends. These misaligned primers can be extended by PolIV. Exhibits no 3'-5' exonuclease (proofreading) activity. May be involved in translesional synthesis, in conjunction with the beta clamp from PolIII. The chain is DNA polymerase IV from Staphylococcus haemolyticus (strain JCSC1435).